A 551-amino-acid chain; its full sequence is Protein ROOT HAIR SPECIFIC 17 (551 aa).

The helical; Signal-anchor for type II membrane protein transmembrane segment at 39–59 (LFPLVSAVSGCLLLILFSFST) threads the bilayer. Residues Asn109 and Asn153 are each glycosylated (N-linked (GlcNAc...) asparagine). Residue 293–295 (HLR) participates in substrate binding. N-linked (GlcNAc...) asparagine glycans are attached at residues Asn405 and Asn465. A disordered region spans residues 515-539 (KAKHVNEDDSSEYSEIGNVPISSRS).

This sequence belongs to the glycosyltransferase GT106 family. As to expression, specifically expressed in the root hair.

It is found in the membrane. Its pathway is glycan metabolism. This Arabidopsis thaliana (Mouse-ear cress) protein is Protein ROOT HAIR SPECIFIC 17.